The primary structure comprises 446 residues: tRNA-2-methylthio-N(6)-dimethylallyladenosine synthase (446 aa).

An MTTase N-terminal domain is found at 3 to 119 (KKIFIKTFGC…INEAILNHLK (117 aa)). Residues cysteine 12, cysteine 48, cysteine 82, cysteine 158, cysteine 162, and cysteine 165 each coordinate [4Fe-4S] cluster. The Radical SAM core domain maps to 144-374 (KDSKVSSFLT…QEKLFNNQIK (231 aa)). The TRAM domain occupies 377–439 (KSLENKILNV…QNSLFGKLTE (63 aa)).

The protein belongs to the methylthiotransferase family. MiaB subfamily. As to quaternary structure, monomer. Requires [4Fe-4S] cluster as cofactor.

The protein resides in the cytoplasm. The enzyme catalyses N(6)-dimethylallyladenosine(37) in tRNA + (sulfur carrier)-SH + AH2 + 2 S-adenosyl-L-methionine = 2-methylsulfanyl-N(6)-dimethylallyladenosine(37) in tRNA + (sulfur carrier)-H + 5'-deoxyadenosine + L-methionine + A + S-adenosyl-L-homocysteine + 2 H(+). Catalyzes the methylthiolation of N6-(dimethylallyl)adenosine (i(6)A), leading to the formation of 2-methylthio-N6-(dimethylallyl)adenosine (ms(2)i(6)A) at position 37 in tRNAs that read codons beginning with uridine. In Pelagibacter ubique (strain HTCC1062), this protein is tRNA-2-methylthio-N(6)-dimethylallyladenosine synthase.